The chain runs to 208 residues: Small ribosomal subunit protein uS4 (208 aa).

The S4 RNA-binding domain maps to 95 to 161; the sequence is MRLDALVLRA…VPLQVAAAGA (67 aa).

It belongs to the universal ribosomal protein uS4 family. In terms of assembly, part of the 30S ribosomal subunit. Contacts protein S5. The interaction surface between S4 and S5 is involved in control of translational fidelity.

Its function is as follows. One of the primary rRNA binding proteins, it binds directly to 16S rRNA where it nucleates assembly of the body of the 30S subunit. In terms of biological role, with S5 and S12 plays an important role in translational accuracy. In Pseudarthrobacter chlorophenolicus (strain ATCC 700700 / DSM 12829 / CIP 107037 / JCM 12360 / KCTC 9906 / NCIMB 13794 / A6) (Arthrobacter chlorophenolicus), this protein is Small ribosomal subunit protein uS4.